We begin with the raw amino-acid sequence, 694 residues long: Elongation factor G 2 (694 aa).

A tr-type G domain is found at 8 to 282 (TAIRNIGIMA…AVVSYLPSPL (275 aa)). GTP is bound by residues 17–24 (AHIDAGKT), 81–85 (DTPGH), and 135–138 (NKMD).

Belongs to the TRAFAC class translation factor GTPase superfamily. Classic translation factor GTPase family. EF-G/EF-2 subfamily.

The protein resides in the cytoplasm. Catalyzes the GTP-dependent ribosomal translocation step during translation elongation. During this step, the ribosome changes from the pre-translocational (PRE) to the post-translocational (POST) state as the newly formed A-site-bound peptidyl-tRNA and P-site-bound deacylated tRNA move to the P and E sites, respectively. Catalyzes the coordinated movement of the two tRNA molecules, the mRNA and conformational changes in the ribosome. The chain is Elongation factor G 2 from Syntrophomonas wolfei subsp. wolfei (strain DSM 2245B / Goettingen).